Here is a 567-residue protein sequence, read N- to C-terminus: Polyadenylate-binding protein-interacting protein 7 (567 aa).

The interval 1 to 22 (MSLTKKASEPKLSGTSIKPTTL) is disordered. Residues 13 to 22 (SGTSIKPTTL) are compositionally biased toward polar residues. Residues 21 to 31 (TLNPHAAEFVP) carry the PAM2-like motif. The 45-residue stretch at 215 to 259 (DMEVNPVDFLASQFPGFAAESLAEVYFANGCDLQLTIEMLTQLEL) folds into the CUE domain. The segment at 355–387 (RNDSADSSIGSSRNSGAYKSGRGRSIYSDKLQS) is disordered. Positions 359–371 (ADSSIGSSRNSGA) are enriched in polar residues. Positions 485–567 (IDLHGLHVSE…QAGLLRVIIY (83 aa)) constitute a Smr domain.

As to quaternary structure, interacts with MPC and PAB2. In terms of tissue distribution, expressed in cauline leaves, stems, rosette leaves, immature siliques and primary inflorescences.

This is Polyadenylate-binding protein-interacting protein 7 (CID7) from Arabidopsis thaliana (Mouse-ear cress).